We begin with the raw amino-acid sequence, 413 residues long: Putative F-box protein At3g58820 (413 aa).

Positions 1–48 constitute an F-box domain; sequence MDGVSSLPNELLCHILSFLTTKEAALTSILSKRWRNLIAFVPNLYIDD.

This chain is Putative F-box protein At3g58820, found in Arabidopsis thaliana (Mouse-ear cress).